The sequence spans 221 residues: Germin-like protein 5-1 (221 aa).

The signal sequence occupies residues 1 to 25 (MARPSLPCAVVAVLLLALLPTPSTA). Cys35 and Cys50 form a disulfide bridge. The 149-residue stretch at 62–210 (KGLAAAGNTN…AFQVGTKEVE (149 aa)) folds into the Cupin type-1 domain. Residue Asn71 is glycosylated (N-linked (GlcNAc...) asparagine). The Mn(2+) site is built by His110, His112, Glu117, and His156.

It belongs to the germin family. As to quaternary structure, oligomer (believed to be a pentamer but probably hexamer).

It is found in the secreted. The protein localises to the extracellular space. Its subcellular location is the apoplast. Functionally, may play a role in plant defense. Probably has no oxalate oxidase activity even if the active site is conserved. The polypeptide is Germin-like protein 5-1 (Oryza sativa subsp. japonica (Rice)).